The sequence spans 1388 residues: MPPGTKGDPSNVTQPLPCLPSAEEDAIKVFVRIRPPVEGTLTGVDGEQGLCLTALSSTTIRLHSKPEPKMFTFDHVANVDTNQESVFSSVAKNIVESCMNGYNGTIFAYGQTGSGKTFTMLGPSESDNFTHNLRGVIPRSFEYLFFLINREKEKAGEGKSFLCKCSFIEIYNEQIFDLLDSASAGLFLREHIKKGVFVVGAVEQVVTSAAEAYQVLSMGWRNRRVASTSMNRESSRSHAVFTVTIESMEKTNDLVNIRSSQLNLVDLAGSERQKDTQTEGVRLKEAGSINRSLSCLGQVITALVDVANGRQRHICYRDSKLTFLLRDSLGGNAKTFYIANVHPGSKCFGETLSTLQFAQRAKLIKNKAVVNEDTQGNVSQLQAEVKKLKEQLSQLLSGQMPGDISVARVPSVGDNNMDYMNNFIEAMMILEKSDREKKVLLQKVVQLEDLCNKKEKFIQSNKMIVKFREDHISRLEKAHKEGRISLSNNEQDDFIAELKEEIRTLKEQVEHHPRVAKYALENHSLREENKRLHSLQSVKRAQEVTAQMIAELEKAFLEVSVSEKDRQVAPMHSTPIQLDNNSLMSAARMRERMLQLESELATSKQEYEEFKELTKKKQVEQESELQSLIKSNQHLENILEAIKANKRHEVSQLNRMHAAETIKNMTTPTKSYNLRSRLVPRLSPDAMPNGLMDTPKSGDVMDDIINEPIPPEMSEQAYEAIAEELRIVQEQVTALQAKLDEEEGKNIRLQQQVNKLELCSTQIQELFNSERSNWNKEQQDLIAQIKSLEKQKQENKSQEDVLKSEVHDLRVVLQSADRELGAVKGEYSLYREKQEKELSQLSARHMDVQLQLDNVRLEHETLLEEKRSLQDAFDNLEEVMKFEIDQLKQEISDSKHENETLRAEFSNLLELLETEKERRQKLTSQLEEDKENKTKELLQVVDENMHLRKQCSELMTKCEQQVTELHGLEHSLTSSKEMIADLEKKNTADKEVVADLMNQIQVHRTTIIHKTESIDLLTRELEDIHSKYSIVLLAKEESKTVIEEQEKQIEELRECLERKQSADNIEKELLCDDLAHATEELEKLTEAFNKQEALLHTHEKELVEKEQQISELTNQVKLMTDLEISREQEKIRPASSNSSSPVVLPETPRTPEGNPYDSEIANLQKRNTNLEILVSELNEERTSKNEEIIRLKMQLCETENMRLEIQNLQGMCKELKSQLENCNNVMKDSNDQKPSDMQDLKREIEKEVSERMEKGKATEHILKLQAELEETRNILCTKDHSLNELSKEIERTRSLEAKAFTEKEEIRSILEGKYEETEKLSHELDMLRKQVLFLAEENGKILGHQNPNQKIQYLVKLKKENNKLLEEAEKLRIENLFLKESKKCEHCN.

One can recognise a Kinesin motor domain in the interval 26–364; it reads AIKVFVRIRP…LQFAQRAKLI (339 aa). Residue 110 to 117 coordinates ATP; the sequence is GQTGSGKT. The stretch at 369-1383 forms a coiled coil; sequence VVNEDTQGNV…ENLFLKESKK (1015 aa). The interval 1127–1156 is disordered; that stretch reads EQEKIRPASSNSSSPVVLPETPRTPEGNPY. A necessary for its targeting to microtubule minus ends region spans residues 1139-1388; that stretch reads SSPVVLPETP…KESKKCEHCN (250 aa).

It belongs to the TRAFAC class myosin-kinesin ATPase superfamily. Kinesin family. KLP2 subfamily. As to quaternary structure, homodimer. Dimerization is required for targeting to microtubule minus ends. Found in a complex with tpx2 and microtubules. Its association with microtubules and targeting to microtubule minus ends requires tpx2. Strongly expressed in testis and weakly in lung (at protein level).

The protein resides in the cytoplasm. Its subcellular location is the cytoskeleton. It localises to the microtubule organizing center. It is found in the centrosome. The protein localises to the spindle. The protein resides in the spindle pole. In terms of biological role, plus-end directed kinesin-like motor enzyme involved in mitotic spindle assembly. Required for centrosome separation and maintenance of spindle bipolarity during mitosis. In Xenopus laevis (African clawed frog), this protein is Kinesin-like protein KIF15-A (kif15-a).